The following is a 590-amino-acid chain: MAPAPATTSSSKRSKKRKQPVAPPPESDSESEELSYDTAAADEEEGEEEAPNQMEELEEEQEEEKKEKKQKKEMSKEKKRKKEKGNEGGSGILTNMLFSELGVSEPTARAIREMNYTYLTQIQARSIPHLLNGKDVMGAAKTGSGKTLAFLIPAIEMLHHAHFMPRNGTGVVVVCPTRELAIQTHNVAKELMKYHSQTLGYIIGGNGRRGEADQLAKGVNLLVATPGRLLDHLQNTKGFIYRRLKCLIIDEADRLLEQNFEEDMKQIFKRLPLNRQTVLFSATQTEQVKEFAKLSFEKNEESTSKPVYVGVDDAETNATVEGLQQGYCVIDSARRFLVLYAFLKKKQNKKVMVFFSSCNSVKFHAELLNFLQIECSDIHGKQKQQKRTTTFFNFCKAEKGILLCTNVAARGLDIPDVDFIVQYDPPDEPKDYIHRVGRTARGEKGKGEALLFLLPQELKFLIYLKAAKISLTELVFNENKVPNLQSHLENIVGENYFLNQSAKEAYRSYILAYDSHSMKDIFDVHNLNLKDVAASFCFKNPPKVNIDLESSASKHRRKMRKVDGGRRHGISAANPYGRKGGDDKRQFARF.

The interval 1-92 is disordered; it reads MAPAPATTSS…EKGNEGGSGI (92 aa). The span at 27-62 shows a compositional bias: acidic residues; sequence SDSESEELSYDTAAADEEEGEEEAPNQMEELEEEQE. Positions 40 to 87 form a coiled coil; that stretch reads AADEEEGEEEAPNQMEELEEEQEEEKKEKKQKKEMSKEKKRKKEKGNE. Positions 63–76 are enriched in basic and acidic residues; it reads EEKKEKKQKKEMSK. Residues 96–124 carry the Q motif motif; it reads MLFSELGVSEPTARAIREMNYTYLTQIQA. A Helicase ATP-binding domain is found at 127 to 302; that stretch reads IPHLLNGKDV…KLSFEKNEES (176 aa). 140–147 is an ATP binding site; that stretch reads AKTGSGKT. Positions 250 to 253 match the DEAD box motif; that stretch reads DEAD. The Helicase C-terminal domain maps to 335–488; that stretch reads RFLVLYAFLK…NKVPNLQSHL (154 aa). The segment at 551–590 is disordered; it reads SASKHRRKMRKVDGGRRHGISAANPYGRKGGDDKRQFARF. Residues 579–590 show a composition bias toward basic and acidic residues; the sequence is KGGDDKRQFARF.

This sequence belongs to the DEAD box helicase family. DDX18/HAS1 subfamily.

It catalyses the reaction ATP + H2O = ADP + phosphate + H(+). This Oryza sativa subsp. japonica (Rice) protein is DEAD-box ATP-dependent RNA helicase 27.